Reading from the N-terminus, the 179-residue chain is Acireductone dioxygenase (179 aa).

4 residues coordinate Fe(2+): His99, His101, Glu105, and His144. Positions 99, 101, 105, and 144 each coordinate Ni(2+).

It belongs to the acireductone dioxygenase (ARD) family. As to quaternary structure, monomer. The cofactor is Fe(2+). It depends on Ni(2+) as a cofactor.

The catalysed reaction is 1,2-dihydroxy-5-(methylsulfanyl)pent-1-en-3-one + O2 = 3-(methylsulfanyl)propanoate + CO + formate + 2 H(+). The enzyme catalyses 1,2-dihydroxy-5-(methylsulfanyl)pent-1-en-3-one + O2 = 4-methylsulfanyl-2-oxobutanoate + formate + 2 H(+). It functions in the pathway amino-acid biosynthesis; L-methionine biosynthesis via salvage pathway; L-methionine from S-methyl-5-thio-alpha-D-ribose 1-phosphate: step 5/6. Catalyzes 2 different reactions between oxygen and the acireductone 1,2-dihydroxy-3-keto-5-methylthiopentene (DHK-MTPene) depending upon the metal bound in the active site. Fe-containing acireductone dioxygenase (Fe-ARD) produces formate and 2-keto-4-methylthiobutyrate (KMTB), the alpha-ketoacid precursor of methionine in the methionine recycle pathway. Ni-containing acireductone dioxygenase (Ni-ARD) produces methylthiopropionate, carbon monoxide and formate, and does not lie on the methionine recycle pathway. This Exiguobacterium sibiricum (strain DSM 17290 / CCUG 55495 / CIP 109462 / JCM 13490 / 255-15) protein is Acireductone dioxygenase.